The chain runs to 323 residues: MIDFGNFYSLIAKNHLSHWLETLPAQIASWQREQQHGLFKQWSNAVEFLPEIKPYRLDLLHSVTAESEEPLSAGQIKRIETLMRNLMPWRKGPFSLYGVNIDTEWRSDWKWDRVLPHLSDLTGRTILDVGCGSGYHMWRMIGAGAHLAVGIDPTQLFLCQFEAVRKLLGNDQRAHLLPLGIEQLPALKAFDTVFSMGVLYHRRSPLEHLWQLKDQLVNEGELVLETLIIDGDENTVLVPGDRYAQMRNVYFIPSALALKNWLKKCGFVDIRIADVSVTTTEEQRRTEWMVTESLSDFLDPHDPGKTVEGYPAPKRAVLIARKP.

Carboxy-S-adenosyl-L-methionine-binding positions include lysine 91, tryptophan 105, lysine 110, glycine 130, 152-154, 181-182, methionine 196, tyrosine 200, and arginine 315; these read DPT and IE.

It belongs to the class I-like SAM-binding methyltransferase superfamily. CmoB family. In terms of assembly, homotetramer.

It carries out the reaction carboxy-S-adenosyl-L-methionine + 5-hydroxyuridine(34) in tRNA = 5-carboxymethoxyuridine(34) in tRNA + S-adenosyl-L-homocysteine + H(+). In terms of biological role, catalyzes carboxymethyl transfer from carboxy-S-adenosyl-L-methionine (Cx-SAM) to 5-hydroxyuridine (ho5U) to form 5-carboxymethoxyuridine (cmo5U) at position 34 in tRNAs. The protein is tRNA U34 carboxymethyltransferase of Escherichia fergusonii (strain ATCC 35469 / DSM 13698 / CCUG 18766 / IAM 14443 / JCM 21226 / LMG 7866 / NBRC 102419 / NCTC 12128 / CDC 0568-73).